A 514-amino-acid polypeptide reads, in one-letter code: Voltage-gated potassium channel regulatory subunit KCNG1 (514 aa).

Residues 1 to 224 are Cytoplasmic-facing; sequence MTLLPGDNSD…DMVEKPHSGL (224 aa). Residues 181–196 show a composition bias toward acidic residues; that stretch reads EREDEEEALDSEDQES. A disordered region spans residues 181-205; that stretch reads EREDEEEALDSEDQESEGPSTSEGR. The chain crosses the membrane as a helical span at residues 225–246; sequence PGKVFACLSVLFVTVTAVNLSV. Residues 247 to 267 are Extracellular-facing; that stretch reads STLPSLREEEEQGQCSQMCHN. A helical transmembrane segment spans residues 268–289; it reads VFIVESVCVGWFSLEFLLRFIQ. The Cytoplasmic portion of the chain corresponds to 290–300; it reads APSKFAFLRSP. A helical membrane pass occupies residues 301-321; the sequence is LTLIDLVAILPYYVTLLVDGA. The Extracellular segment spans residues 322–338; the sequence is ASSRRKPSTGNSYLDKV. Residues 339-359 form a helical; Voltage-sensor membrane-spanning segment; sequence GLVLRVLRALRILYVMRLARH. The Cytoplasmic portion of the chain corresponds to 360–374; that stretch reads SLGLQTLGLTARRCT. A helical transmembrane segment spans residues 375–396; sequence REFGLLLLFLCVAIALFAPLLY. The Extracellular portion of the chain corresponds to 397–411; that stretch reads VIENEMADSPEFTSI. Positions 412-423 form an intramembrane region, helical; it reads PACYWWAVITMT. A Selectivity filter motif is present at residues 424-429; sequence TVGYGD. An intramembrane segment occupies 424 to 431; that stretch reads TVGYGDMV. Topologically, residues 432–438 are extracellular; it reads PRSTPGQ. Residues 439–467 traverse the membrane as a helical segment; the sequence is VVALSSILSGILLMAFPVTSIFHTFSRSY. Residues 468-514 lie on the Cytoplasmic side of the membrane; the sequence is LELKQEQERVLIRRAQYLIKTKSQLSGMSQDSDILFGSASSDTRDNN.

It belongs to the potassium channel family. G (TC 1.A.1.2) subfamily. Kv6.1/KCNG1 sub-subfamily. Heterotetramer with KCNB1 or KCNB2.

The protein localises to the cell membrane. Its function is as follows. Regulatory alpha-subunit of the voltage-gated potassium (Kv) channel which, when coassembled with KCNB1 or KCNB2, can modulate their expression and their gating kinetics by acting on deactivation upon repolarization and inactivation during maintained depolarization. Potassium channel subunit that does not form functional channels by itself. In Rattus norvegicus (Rat), this protein is Voltage-gated potassium channel regulatory subunit KCNG1.